The following is an 859-amino-acid chain: Fanconi anemia group B protein (859 aa).

At threonine 2 the chain carries N-acetylthreonine.

In terms of assembly, belongs to the multisubunit FA complex composed of FANCA, FANCB, FANCC, FANCE, FANCF, FANCG, FANCL/PHF9 and FANCM. The complex is not found in FA patients.

The protein resides in the nucleus. Functionally, DNA repair protein required for FANCD2 ubiquitination. This chain is Fanconi anemia group B protein (FANCB), found in Homo sapiens (Human).